Here is a 244-residue protein sequence, read N- to C-terminus: tRNA (guanine-N(7)-)-methyltransferase (244 aa).

Residues 1–11 (MTDTHVPPPEL) are compositionally biased toward pro residues. A disordered region spans residues 1-23 (MTDTHVPPPELPAAEEGEERPHR). Positions 74, 99, 126, and 149 each coordinate S-adenosyl-L-methionine. Asp-149 is a catalytic residue. Substrate is bound by residues Lys-153, Asp-185, and 222–225 (TKFE).

Belongs to the class I-like SAM-binding methyltransferase superfamily. TrmB family.

It carries out the reaction guanosine(46) in tRNA + S-adenosyl-L-methionine = N(7)-methylguanosine(46) in tRNA + S-adenosyl-L-homocysteine. Its pathway is tRNA modification; N(7)-methylguanine-tRNA biosynthesis. In terms of biological role, catalyzes the formation of N(7)-methylguanine at position 46 (m7G46) in tRNA. The protein is tRNA (guanine-N(7)-)-methyltransferase of Pseudomonas syringae pv. tomato (strain ATCC BAA-871 / DC3000).